Reading from the N-terminus, the 1070-residue chain is MCFRSIMPPAMADTLDIWAVDSQIASDGSISVDFLLPTGIYIQLEVPREATISYIKQMLWKQVHNYPMFNLLMDIDSYMFACVNQTAVYEELEDETRRLCDVRPFLPVLKLVTRSCDPAEKLDSKIGVLIGKGLHEFDALKDPEVNEFRRKMRKFSEDKIQSLVGLSWIDWLKHTYPPEHEPSVLENLEDKLYGGKLVVAVHFENSQDVFSFQVSPNLNPIKINELAIQKRLTIRGKEEEASPCDYVLQVSGRVEYVFGDHPLIQFQYIRNCVMNRTLPHFILVECCKIKKMYEQEMIAIEAAINRNSSSLPLPLPPKKTRVISHVWGNNNPFQIVLVKGNKLNTEETVKVHVRAGLFHGTELLCKTVVSSEISGKNDHIWNEQLEFDINICDLPRMARLCFAVYAVLDKVKTKKSTKTINPSKYQTIRKAGKVHYPVAWVNTMVFDFKGQLRSGDVILHSWSSFPDELEEMLNPMGTVQTNPYAENATALHIKFPENKKQPYYYPPFDKIIEKAAEIASGDSANVSSRGGKKFLAVLKEILDRDPLSQLCENEMDLIWTLRQDCRENFPQSLPKLLLSIKWNKLEDVAQLQALLQIWPKLPPREALELLDFNYPDQYVREYAVGCLRQMSDEELSQYLLQLVQVLKYEPFLDCALSRFLLERALDNRRIGQFLFWHLRSEVHTPAVSIQFGVILEAYCRGSVGHMKVLSKQVEALNKLKTLNSLIKLNAMKLNRAKGKEAMHTCLKQSAYREALSDLQSPLNPCVILSELYVEKCRYMDSKMKPLWLVYSNRAFGEDAVGVIFKNGDDLRQDMLTLQMLRLMDLLWKEAGLDLRMLPYGCLATGDRSGLIEVVSTSETIADIQLNSSNVAATAAFNKDALLNWLKEYNSGDDLDRAIEEFTLSCAGYCVASYVLGIGDRHSDNIMVKKTGQLFHIDFGHILGNFKSKFGIKRERVPFILTYDFIHVIQQGKTGNTEKFGRFRQCCEDAYLILRRHGNLFITLFALMLTAGLPELTSVKDIQYLKDSLALGKSEEEALKQFKQKFDEALRESWTTKVNWMAHTVRKDYRS.

One can recognise a PI3K-ABD domain in the interval 26–115 (SDGSISVDFL…LPVLKLVTRS (90 aa)). Residues 194–285 (GGKLVVAVHF…RTLPHFILVE (92 aa)) enclose the PI3K-RBD domain. Ser-324 bears the Phosphoserine mark. The C2 PI3K-type domain maps to 327–496 (WGNNNPFQIV…NATALHIKFP (170 aa)). Residues 410–418 (KVKTKKSTK) carry the Nuclear localization signal (NLS) motif. Residues 524–701 (ANVSSRGGKK…GVILEAYCRG (178 aa)) form the PIK helical domain. Residues 772 to 1053 (YVEKCRYMDS…KFDEALRESW (282 aa)) form the PI3K/PI4K catalytic domain. Residues 778–784 (YMDSKMK) are G-loop. Residues 916 to 924 (GIGDRHSDN) form a catalytic loop region. The activation loop stretch occupies residues 935–961 (HIDFGHILGNFKSKFGIKRERVPFILT). The residue at position 1070 (Ser-1070) is a Phosphoserine; by autocatalysis.

Belongs to the PI3/PI4-kinase family. As to quaternary structure, heterodimer of a catalytic subunit PIK3CB and a p85 regulatory subunit (PIK3R1, PIK3R2 or PIK3R3). Interaction with PIK3R2 is required for nuclear localization and nuclear export. Part of a complex with PIK3R1 and PTEN. Binding to PTEN may antagonize the lipid kinase activity under normal growth conditions. Part of a complex involved in autophagosome formation composed of PIK3C3 and PIK3R4. Interacts with BECN1, ATG14 and RAB5A. Post-translationally, autophosphorylation at Ser-1070 negatively regulates the phosphatidylinositol-4,5-bisphosphate 3-kinase activity.

The protein resides in the cytoplasm. It localises to the nucleus. It catalyses the reaction a 1,2-diacyl-sn-glycero-3-phospho-(1D-myo-inositol-4,5-bisphosphate) + ATP = a 1,2-diacyl-sn-glycero-3-phospho-(1D-myo-inositol-3,4,5-trisphosphate) + ADP + H(+). The enzyme catalyses 1-octadecanoyl-2-(5Z,8Z,11Z,14Z)-eicosatetraenoyl-sn-glycero-3-phospho-1D-myo-inositol 4,5-bisphosphate + ATP = 1-octadecanoyl-2-(5Z,8Z,11Z,14Z-eicosatetraenoyl)-sn-glycero-3-phospho-(1D-myo-inositol 3,4,5-triphosphate) + ADP + H(+). The catalysed reaction is L-seryl-[protein] + ATP = O-phospho-L-seryl-[protein] + ADP + H(+). It participates in phospholipid metabolism; phosphatidylinositol phosphate biosynthesis. Functionally, phosphoinositide-3-kinase (PI3K) phosphorylates phosphatidylinositol (PI) derivatives at position 3 of the inositol ring to produce 3-phosphoinositides. Uses ATP and PtdIns(4,5)P2 (phosphatidylinositol 4,5-bisphosphate) to generate phosphatidylinositol 3,4,5-trisphosphate (PIP3). PIP3 plays a key role by recruiting PH domain-containing proteins to the membrane, including AKT1 and PDPK1, activating signaling cascades involved in cell growth, survival, proliferation, motility and morphology. Involved in the activation of AKT1 upon stimulation by G-protein coupled receptors (GPCRs) ligands such as CXCL12, sphingosine 1-phosphate, and lysophosphatidic acid. May also act downstream receptor tyrosine kinases. Required in different signaling pathways for stable platelet adhesion and aggregation. Plays a role in platelet activation signaling triggered by GPCRs, alpha-IIb/beta-3 integrins (ITGA2B/ ITGB3) and ITAM (immunoreceptor tyrosine-based activation motif)-bearing receptors such as GP6. Regulates the strength of adhesion of ITGA2B/ ITGB3 activated receptors necessary for the cellular transmission of contractile forces. Required for platelet aggregation induced by F2 (thrombin) and thromboxane A2 (TXA2). Has a role in cell survival. May have a role in cell migration. Involved in the early stage of autophagosome formation. Modulates the intracellular level of PtdIns3P (phosphatidylinositol 3-phosphate) and activates PIK3C3 kinase activity. May act as a scaffold, independently of its lipid kinase activity to positively regulate autophagy. May have a role in insulin signaling as scaffolding protein in which the lipid kinase activity is not required. May have a kinase-independent function in regulating cell proliferation and in clathrin-mediated endocytosis. Mediator of oncogenic signal in cell lines lacking PTEN. The lipid kinase activity is necessary for its role in oncogenic transformation. Required for the growth of ERBB2 and RAS driven tumors. Also has a protein kinase activity showing autophosphorylation. The sequence is that of Phosphatidylinositol 4,5-bisphosphate 3-kinase catalytic subunit beta isoform (Pik3cb) from Rattus norvegicus (Rat).